A 766-amino-acid chain; its full sequence is Subtilisin-like protease SBT4.15 (766 aa).

The signal sequence occupies residues 1–23 (MVSNQRVRLFMLCFCLVNNAVIA). Positions 24–113 (ATEDENVERK…VFKNTQRQLH (90 aa)) are cleaved as a propeptide — activation peptide. An Inhibitor I9 domain is found at 35 to 113 (YIVYMGEATE…VFKNTQRQLH (79 aa)). One can recognise a Peptidase S8 domain in the interval 117–601 (SWDFLGLVES…SGQINPRRAI (485 aa)). Catalysis depends on Asp-144, which acts as the Charge relay system. The N-linked (GlcNAc...) asparagine glycan is linked to Asn-175. His-210 functions as the Charge relay system in the catalytic mechanism. 3 N-linked (GlcNAc...) asparagine glycosylation sites follow: Asn-233, Asn-376, and Asn-465. One can recognise a PA domain in the interval 365-460 (MYPLTSGSLA…YVFFEDGTKI (96 aa)). Catalysis depends on Ser-543, which acts as the Charge relay system. 3 N-linked (GlcNAc...) asparagine glycosylation sites follow: Asn-624, Asn-638, and Asn-668.

It belongs to the peptidase S8 family. Post-translationally, the C-terminal propeptide is autocleaved.

The protein localises to the secreted. The sequence is that of Subtilisin-like protease SBT4.15 from Arabidopsis thaliana (Mouse-ear cress).